Here is a 59-residue protein sequence, read N- to C-terminus: Toxin TxpA (59 aa).

The chain crosses the membrane as a helical span at residues 7-27 (LMVMIGFANLIGGIMTWVISL).

It localises to the cell membrane. In terms of biological role, toxic component of a type I toxin-antitoxin (TA) system. Overexpression of txpA causes cell lysis; the TxpA protein has been suggested to act on the cell membrane or might possibly block cell wall synthesis. Overexpression in E.coli is not toxic. The protein is Toxin TxpA of Bacillus subtilis (strain 168).